We begin with the raw amino-acid sequence, 382 residues long: Anhydro-N-acetylmuramic acid kinase (382 aa).

Residue 9-16 participates in ATP binding; the sequence is GTSLDGID.

This sequence belongs to the anhydro-N-acetylmuramic acid kinase family.

It carries out the reaction 1,6-anhydro-N-acetyl-beta-muramate + ATP + H2O = N-acetyl-D-muramate 6-phosphate + ADP + H(+). It participates in amino-sugar metabolism; 1,6-anhydro-N-acetylmuramate degradation. The protein operates within cell wall biogenesis; peptidoglycan recycling. In terms of biological role, catalyzes the specific phosphorylation of 1,6-anhydro-N-acetylmuramic acid (anhMurNAc) with the simultaneous cleavage of the 1,6-anhydro ring, generating MurNAc-6-P. Is required for the utilization of anhMurNAc either imported from the medium or derived from its own cell wall murein, and thus plays a role in cell wall recycling. The sequence is that of Anhydro-N-acetylmuramic acid kinase from Bacillus anthracis (strain A0248).